Consider the following 158-residue polypeptide: NAD(P)H-quinone oxidoreductase subunit J, chloroplastic (158 aa).

It belongs to the complex I 30 kDa subunit family. NDH is composed of at least 16 different subunits, 5 of which are encoded in the nucleus.

Its subcellular location is the plastid. The protein localises to the chloroplast thylakoid membrane. It carries out the reaction a plastoquinone + NADH + (n+1) H(+)(in) = a plastoquinol + NAD(+) + n H(+)(out). The enzyme catalyses a plastoquinone + NADPH + (n+1) H(+)(in) = a plastoquinol + NADP(+) + n H(+)(out). NDH shuttles electrons from NAD(P)H:plastoquinone, via FMN and iron-sulfur (Fe-S) centers, to quinones in the photosynthetic chain and possibly in a chloroplast respiratory chain. The immediate electron acceptor for the enzyme in this species is believed to be plastoquinone. Couples the redox reaction to proton translocation, and thus conserves the redox energy in a proton gradient. This Angiopteris evecta (Mule's foot fern) protein is NAD(P)H-quinone oxidoreductase subunit J, chloroplastic.